We begin with the raw amino-acid sequence, 321 residues long: Putative membrane-bound redox modulator Alx (321 aa).

Topologically, residues 1–6 (MNTVGT) are periplasmic. The chain crosses the membrane as a helical span at residues 7–27 (PLLWGGFAVVVAIMLAIDLLL). At 28–43 (QGRRGAHAMTMKQAAA) the chain is on the cytoplasmic side. The helical transmembrane segment at 44-64 (WSLVWVTLSLLFNAAFWWYLV) threads the bilayer. At 65–89 (QTEGRAVADPQALAFLTGYLIEKSL) the chain is on the periplasmic side. Residues 90 to 110 (AVDNVFVWLMLFSYFSVPAAL) traverse the membrane as a helical segment. Topologically, residues 111-113 (QRR) are cytoplasmic. Residues 114-134 (VLVYGVLGAIVLRTIMIFTGS) traverse the membrane as a helical segment. Trp-135 is a topological domain (periplasmic). A helical membrane pass occupies residues 136 to 156 (LISQFDWILYIFGAFLLFTGV). Residues 157 to 198 (KMALAHEDESGIGDKPLVRWLRGHLRMTDTIDNEHFFVRKNG) are Cytoplasmic-facing. The chain crosses the membrane as a helical span at residues 199–219 (LLYATPLMLVLILVELSDVIF). At 220 to 225 (AVDSIP) the chain is on the periplasmic side. A helical transmembrane segment spans residues 226 to 246 (AIFAVTTDPFIVLTSNLFAIL). At 247–261 (GLRAMYFLLAGVAER) the chain is on the cytoplasmic side. Residues 262–282 (FSMLKYGLAVILVFIGIKMLI) form a helical membrane-spanning segment. Over 283 to 286 (VDFY) the chain is Periplasmic. A helical membrane pass occupies residues 287–307 (HIPIAVSLGVVFGILVMTFII). Residues 308–321 (NAWVNYRHDKQRGG) are Cytoplasmic-facing.

Belongs to the TerC family.

It is found in the cell inner membrane. Its function is as follows. Has been proposed to be a redox modulator. This Escherichia coli (strain K12) protein is Putative membrane-bound redox modulator Alx.